The chain runs to 189 residues: MLGMIKNSLFGSVETWPWQVLSKGDKQDISYEERACEGGKFATVEMTDKPVDEALREAMPKVMKYVGGSNDKGIGMGMTVPISFAVFPSDGGSLQKKLKVWFRIPNEFQSNPPVPSDDSIKIEERESITVYSLQFGGYAKEADYVARAAQLRTALEGIATCRSDVYFCTGYDPPMKPYGRRNEVWLVKA.

Belongs to the HEBP family. As to quaternary structure, monomer.

The protein localises to the cytoplasm. Functionally, may bind free porphyrinogens that may be present in the cell and thus facilitate removal of these potentially toxic compound. Binds with a high affinity to one molecule of heme or porphyrins. It binds metalloporphyrins, free porphyrins and N-methylprotoporphyrin with similar affinities. This Sus scrofa (Pig) protein is Heme-binding protein 1 (HEBP1).